Here is a 500-residue protein sequence, read N- to C-terminus: L-arabinose isomerase (500 aa).

Glu-306, Glu-333, His-350, and His-450 together coordinate Mn(2+).

Belongs to the arabinose isomerase family. In terms of assembly, homohexamer. Mn(2+) serves as cofactor.

It catalyses the reaction beta-L-arabinopyranose = L-ribulose. Its pathway is carbohydrate degradation; L-arabinose degradation via L-ribulose; D-xylulose 5-phosphate from L-arabinose (bacterial route): step 1/3. Its function is as follows. Catalyzes the conversion of L-arabinose to L-ribulose. The polypeptide is L-arabinose isomerase (Yersinia enterocolitica serotype O:8 / biotype 1B (strain NCTC 13174 / 8081)).